The chain runs to 60 residues: Large ribosomal subunit protein uL30 (60 aa).

It belongs to the universal ribosomal protein uL30 family. As to quaternary structure, part of the 50S ribosomal subunit.

The sequence is that of Large ribosomal subunit protein uL30 from Flavobacterium psychrophilum (strain ATCC 49511 / DSM 21280 / CIP 103535 / JIP02/86).